A 664-amino-acid polypeptide reads, in one-letter code: Trifunctional UDP-glucose 4,6-dehydratase/UDP-4-keto-6-deoxy-D-glucose 3,5-epimerase/UDP-4-keto-L-rhamnose-reductase RHM3 (664 aa).

13 to 19 (GAAGFIA) is a binding site for NAD(+). Thr-132 is a binding site for substrate. Catalysis depends on Asp-133, which acts as the Proton donor. Residues Glu-134 and Tyr-159 each act as proton acceptor in the active site. 386–392 (GKTGWLG) contacts NADP(+).

It in the N-terminal section; belongs to the NAD(P)-dependent epimerase/dehydratase family. dTDP-glucose dehydratase subfamily. This sequence in the C-terminal section; belongs to the dTDP-4-dehydrorhamnose reductase family. It depends on NAD(+) as a cofactor. NADP(+) is required as a cofactor. In terms of tissue distribution, expressed in roots, stems, seedlings, and siliques. Lower expression in inflorescence tips, and leaves.

The catalysed reaction is UDP-alpha-D-glucose = UDP-4-dehydro-6-deoxy-alpha-D-glucose + H2O. The protein operates within carbohydrate biosynthesis. In terms of biological role, trifunctional enzyme involved in UDP-beta-L-rhamnose biosynthesis, a precursor of the primary cell wall components rhamnogalacturonan I (RG-I) and rhamnogalacturonan II (RG-II). Catalyzes the dehydration of UDP-glucose to form UDP-4-dehydro-6-deoxy-D-glucose followed by the epimerization of the C3' and C5' positions of UDP-4-dehydro-6-deoxy-D-glucose to form UDP-4-keto-beta-L-rhamnose and the reduction of UDP-4-keto-beta-L-rhamnose to yield UDP-beta-L-rhamnose. The polypeptide is Trifunctional UDP-glucose 4,6-dehydratase/UDP-4-keto-6-deoxy-D-glucose 3,5-epimerase/UDP-4-keto-L-rhamnose-reductase RHM3 (Arabidopsis thaliana (Mouse-ear cress)).